The primary structure comprises 190 residues: Holliday junction branch migration complex subunit RuvA (190 aa).

The interval 1–64 (MIGKLTGTLL…EDAQLLYGFG (64 aa)) is domain I. The interval 65 to 137 (TAQERQAFRE…LKGKLGADVG (73 aa)) is domain II. The interval 137-141 (GVRAH) is flexible linker. Residues 142-190 (AANDNQADILQALLALGYNDKEAAAALKALPADVGVSEGIKLALKSLSK) form a domain III region.

The protein belongs to the RuvA family. In terms of assembly, homotetramer. Forms an RuvA(8)-RuvB(12)-Holliday junction (HJ) complex. HJ DNA is sandwiched between 2 RuvA tetramers; dsDNA enters through RuvA and exits via RuvB. An RuvB hexamer assembles on each DNA strand where it exits the tetramer. Each RuvB hexamer is contacted by two RuvA subunits (via domain III) on 2 adjacent RuvB subunits; this complex drives branch migration. In the full resolvosome a probable DNA-RuvA(4)-RuvB(12)-RuvC(2) complex forms which resolves the HJ.

The protein resides in the cytoplasm. Functionally, the RuvA-RuvB-RuvC complex processes Holliday junction (HJ) DNA during genetic recombination and DNA repair, while the RuvA-RuvB complex plays an important role in the rescue of blocked DNA replication forks via replication fork reversal (RFR). RuvA specifically binds to HJ cruciform DNA, conferring on it an open structure. The RuvB hexamer acts as an ATP-dependent pump, pulling dsDNA into and through the RuvAB complex. HJ branch migration allows RuvC to scan DNA until it finds its consensus sequence, where it cleaves and resolves the cruciform DNA. The protein is Holliday junction branch migration complex subunit RuvA of Acidovorax ebreus (strain TPSY) (Diaphorobacter sp. (strain TPSY)).